The following is a 246-amino-acid chain: Ribosomal RNA large subunit methyltransferase E (246 aa).

Residues Gly81, Trp83, Asp104, Asp120, and Asp144 each coordinate S-adenosyl-L-methionine. Lys184 (proton acceptor) is an active-site residue.

This sequence belongs to the class I-like SAM-binding methyltransferase superfamily. RNA methyltransferase RlmE family.

It is found in the cytoplasm. It carries out the reaction uridine(2552) in 23S rRNA + S-adenosyl-L-methionine = 2'-O-methyluridine(2552) in 23S rRNA + S-adenosyl-L-homocysteine + H(+). Specifically methylates the uridine in position 2552 of 23S rRNA at the 2'-O position of the ribose in the fully assembled 50S ribosomal subunit. The chain is Ribosomal RNA large subunit methyltransferase E from Agrobacterium fabrum (strain C58 / ATCC 33970) (Agrobacterium tumefaciens (strain C58)).